The sequence spans 594 residues: CTP synthase (594 aa).

Residues 1 to 272 (MARPKNVKYV…DLRVLKKLGL (272 aa)) form an amidoligase domain region. Serine 18 contacts CTP. Position 18 (serine 18) interacts with UTP. 19–24 (SLGKGI) contacts ATP. Tyrosine 59 is an L-glutamine binding site. Aspartate 76 is an ATP binding site. The Mg(2+) site is built by aspartate 76 and glutamate 146. CTP-binding positions include 153-155 (DIE), 193-198 (KTKPTQ), and lysine 229. Residues 193-198 (KTKPTQ) and lysine 229 contribute to the UTP site. One can recognise a Glutamine amidotransferase type-1 domain in the interval 299 to 543 (TIVVCGKYTE…VGAAKSYAAV (245 aa)). Glycine 363 contacts L-glutamine. The Nucleophile; for glutamine hydrolysis role is filled by cysteine 390. Residues 391–394 (LGMQ), glutamate 414, and arginine 471 each bind L-glutamine. Residues histidine 516 and glutamate 518 contribute to the active site. Residues 562 to 571 (AEAYAAYSEE) are compositionally biased toward low complexity. The interval 562-594 (AEAYAAYSEESSAESKSFFPDNGGHDEERDSGQ) is disordered. The span at 584 to 594 (GGHDEERDSGQ) shows a compositional bias: basic and acidic residues.

It belongs to the CTP synthase family. Homotetramer.

It carries out the reaction UTP + L-glutamine + ATP + H2O = CTP + L-glutamate + ADP + phosphate + 2 H(+). The enzyme catalyses L-glutamine + H2O = L-glutamate + NH4(+). It catalyses the reaction UTP + NH4(+) + ATP = CTP + ADP + phosphate + 2 H(+). The protein operates within pyrimidine metabolism; CTP biosynthesis via de novo pathway; CTP from UDP: step 2/2. With respect to regulation, allosterically activated by GTP, when glutamine is the substrate; GTP has no effect on the reaction when ammonia is the substrate. The allosteric effector GTP functions by stabilizing the protein conformation that binds the tetrahedral intermediate(s) formed during glutamine hydrolysis. Inhibited by the product CTP, via allosteric rather than competitive inhibition. Functionally, catalyzes the ATP-dependent amination of UTP to CTP with either L-glutamine or ammonia as the source of nitrogen. Regulates intracellular CTP levels through interactions with the four ribonucleotide triphosphates. This is CTP synthase from Chlorobium phaeovibrioides (strain DSM 265 / 1930) (Prosthecochloris vibrioformis (strain DSM 265)).